A 428-amino-acid chain; its full sequence is Glutamate-1-semialdehyde 2,1-aminomutase (428 aa).

Residue Lys-267 is modified to N6-(pyridoxal phosphate)lysine.

The protein belongs to the class-III pyridoxal-phosphate-dependent aminotransferase family. HemL subfamily. Homodimer. The cofactor is pyridoxal 5'-phosphate.

It localises to the cytoplasm. It catalyses the reaction (S)-4-amino-5-oxopentanoate = 5-aminolevulinate. It functions in the pathway porphyrin-containing compound metabolism; protoporphyrin-IX biosynthesis; 5-aminolevulinate from L-glutamyl-tRNA(Glu): step 2/2. The protein operates within porphyrin-containing compound metabolism; chlorophyll biosynthesis. This is Glutamate-1-semialdehyde 2,1-aminomutase from Prochlorococcus marinus (strain NATL1A).